A 361-amino-acid polypeptide reads, in one-letter code: Probable dual-specificity RNA methyltransferase RlmN (361 aa).

The active-site Proton acceptor is the Glu-91. The Radical SAM core domain occupies 97–329 (QHYGLSVCVT…KKKGGNCVVR (233 aa)). The cysteines at positions 104 and 340 are disulfide-linked. Residues Cys-111, Cys-115, and Cys-118 each coordinate [4Fe-4S] cluster. S-adenosyl-L-methionine is bound by residues 163–164 (GE), Ser-195, 218–220 (SLH), and Asn-296. The S-methylcysteine intermediate role is filled by Cys-340.

Belongs to the radical SAM superfamily. RlmN family. It depends on [4Fe-4S] cluster as a cofactor.

The protein resides in the cytoplasm. It catalyses the reaction adenosine(2503) in 23S rRNA + 2 reduced [2Fe-2S]-[ferredoxin] + 2 S-adenosyl-L-methionine = 2-methyladenosine(2503) in 23S rRNA + 5'-deoxyadenosine + L-methionine + 2 oxidized [2Fe-2S]-[ferredoxin] + S-adenosyl-L-homocysteine. The catalysed reaction is adenosine(37) in tRNA + 2 reduced [2Fe-2S]-[ferredoxin] + 2 S-adenosyl-L-methionine = 2-methyladenosine(37) in tRNA + 5'-deoxyadenosine + L-methionine + 2 oxidized [2Fe-2S]-[ferredoxin] + S-adenosyl-L-homocysteine. Its function is as follows. Specifically methylates position 2 of adenine 2503 in 23S rRNA and position 2 of adenine 37 in tRNAs. The polypeptide is Probable dual-specificity RNA methyltransferase RlmN (Streptococcus pneumoniae (strain P1031)).